We begin with the raw amino-acid sequence, 103 residues long: MAAVSINVTTVKPLGDRVFVKVSPSEEKTAGGIFLPDAAKEKPQIGEVVAVGPGKRNDDGSRTPVEVGVGDKVLYSKYAGTDIKLGGEEFVLLSEKDILAAVS.

Belongs to the GroES chaperonin family. In terms of assembly, heptamer of 7 subunits arranged in a ring. Interacts with the chaperonin GroEL.

The protein localises to the cytoplasm. Functionally, together with the chaperonin GroEL, plays an essential role in assisting protein folding. The GroEL-GroES system forms a nano-cage that allows encapsulation of the non-native substrate proteins and provides a physical environment optimized to promote and accelerate protein folding. GroES binds to the apical surface of the GroEL ring, thereby capping the opening of the GroEL channel. In Microcystis aeruginosa (strain NIES-843 / IAM M-2473), this protein is Co-chaperonin GroES.